The sequence spans 191 residues: Protein GrpE (191 aa).

Residues 1–21 (MSDKKKNAEEFEETFSDKTSE) are compositionally biased toward basic and acidic residues. Residues 1–39 (MSDKKKNAEEFEETFSDKTSEDESTVENETVEENENEDV) form a disordered region. Positions 22–38 (DESTVENETVEENENED) are enriched in acidic residues.

Belongs to the GrpE family. As to quaternary structure, homodimer.

It is found in the cytoplasm. Its function is as follows. Participates actively in the response to hyperosmotic and heat shock by preventing the aggregation of stress-denatured proteins, in association with DnaK and GrpE. It is the nucleotide exchange factor for DnaK and may function as a thermosensor. Unfolded proteins bind initially to DnaJ; upon interaction with the DnaJ-bound protein, DnaK hydrolyzes its bound ATP, resulting in the formation of a stable complex. GrpE releases ADP from DnaK; ATP binding to DnaK triggers the release of the substrate protein, thus completing the reaction cycle. Several rounds of ATP-dependent interactions between DnaJ, DnaK and GrpE are required for fully efficient folding. The sequence is that of Protein GrpE from Tetragenococcus halophilus (Pediococcus halophilus).